The primary structure comprises 355 residues: MEDLEETLFEEFENYSYALDYYSLESDLEEKVQLGVVHWVSLVLYCLSFVLGIPGNAIVIWFTGFKWKKTVSTLWFLNLAIADFIFLLFLPLYISYVVMNFHWPFGIWLCKANSFTAQLNMFASVFFLTVISLDHYIHLIHPVLSHRHRTLKNSLIVIIFIWLLASLIGGPALYFRDTVEFNNHTLCYNNFQKHDPDLTVIRHHVLTWVKFIVGYLFPLLTMSICYLCLIFKVKKRSILISSRHFWTILAVVVAFVVCWTPYHLFSIWELTIHHNSYSHHVMQAGIPLSTGLAFLNSCLNPILYVLISKKFQARFRSSVAEILKYTLWEVSCSGTVSEQLRNSETKNLCLLETAQ.

Topologically, residues 1–41 are extracellular; that stretch reads MEDLEETLFEEFENYSYALDYYSLESDLEEKVQLGVVHWVS. N-linked (GlcNAc...) asparagine glycosylation is present at Asn14. Residues 42–62 traverse the membrane as a helical segment; that stretch reads LVLYCLSFVLGIPGNAIVIWF. The Cytoplasmic segment spans residues 63–73; sequence TGFKWKKTVST. The chain crosses the membrane as a helical span at residues 74-94; the sequence is LWFLNLAIADFIFLLFLPLYI. The Extracellular portion of the chain corresponds to 95-112; it reads SYVVMNFHWPFGIWLCKA. An intrachain disulfide couples Cys110 to Cys187. Residues 113–133 traverse the membrane as a helical segment; sequence NSFTAQLNMFASVFFLTVISL. The Cytoplasmic portion of the chain corresponds to 134–154; it reads DHYIHLIHPVLSHRHRTLKNS. The chain crosses the membrane as a helical span at residues 155 to 175; that stretch reads LIVIIFIWLLASLIGGPALYF. The Extracellular portion of the chain corresponds to 176 to 210; it reads RDTVEFNNHTLCYNNFQKHDPDLTVIRHHVLTWVK. Residues 211–231 traverse the membrane as a helical segment; sequence FIVGYLFPLLTMSICYLCLIF. The Cytoplasmic segment spans residues 232–247; that stretch reads KVKKRSILISSRHFWT. A helical transmembrane segment spans residues 248 to 268; the sequence is ILAVVVAFVVCWTPYHLFSIW. The Extracellular segment spans residues 269–286; that stretch reads ELTIHHNSYSHHVMQAGI. The helical transmembrane segment at 287 to 307 threads the bilayer; the sequence is PLSTGLAFLNSCLNPILYVLI. Topologically, residues 308-355 are cytoplasmic; it reads SKKFQARFRSSVAEILKYTLWEVSCSGTVSEQLRNSETKNLCLLETAQ.

The protein belongs to the chemokine-like receptor (CMKLR) family.

Its subcellular location is the cell membrane. In terms of biological role, receptor for chemoattractant adipokine chemerin/RARRES2 suggesting a role for this receptor in the regulation of inflammation and energy homesotasis. Signals mainly via beta-arrestin pathway. Binding of RARRES2 activates weakly G proteins, calcium mobilization and MAPK1/MAPK3 (ERK1/2) phosphorylation too. Acts also as a receptor for TAFA1, mediates its effects on neuronal stem-cell proliferation and differentiation via the activation of ROCK/ERK and ROCK/STAT3 signaling pathway. The polypeptide is Chemerin-like receptor 2 (CMKLR2) (Macaca mulatta (Rhesus macaque)).